Reading from the N-terminus, the 343-residue chain is Heat-inducible transcription repressor HrcA (343 aa).

This sequence belongs to the HrcA family.

Functionally, negative regulator of class I heat shock genes (grpE-dnaK-dnaJ and groELS operons). Prevents heat-shock induction of these operons. In Thermoanaerobacter sp. (strain X514), this protein is Heat-inducible transcription repressor HrcA.